The following is a 280-amino-acid chain: Probable endonuclease lcl3 (280 aa).

Residues 50-67 (TLIPTLILTTAILSAARF) form a helical membrane-spanning segment. The 169-residue stretch at 89 to 257 (RSIYGKVTSV…KLKGNGMWKG (169 aa)) folds into the TNase-like domain. Arg-140 is a catalytic residue. Asp-145 provides a ligand contact to Ca(2+). Residues Glu-148 and Arg-188 contribute to the active site.

This sequence belongs to the LCL3 family.

The protein resides in the mitochondrion. Its subcellular location is the membrane. The protein is Probable endonuclease lcl3 (lcl3) of Emericella nidulans (strain FGSC A4 / ATCC 38163 / CBS 112.46 / NRRL 194 / M139) (Aspergillus nidulans).